A 626-amino-acid chain; its full sequence is DNA primase (626 aa).

A CHC2-type zinc finger spans residues 39-63 (CPFHGEKTPSFSVSPEKQIFHCFGC). The Toprim domain occupies 264 to 346 (EEITLMEGFM…DVFVLQLPAG (83 aa)). E270, D314, and D316 together coordinate Mg(2+).

This sequence belongs to the DnaG primase family. Monomer. Interacts with DnaB. The cofactor is Zn(2+). It depends on Mg(2+) as a cofactor.

It carries out the reaction ssDNA + n NTP = ssDNA/pppN(pN)n-1 hybrid + (n-1) diphosphate.. RNA polymerase that catalyzes the synthesis of short RNA molecules used as primers for DNA polymerase during DNA replication. The sequence is that of DNA primase from Listeria innocua serovar 6a (strain ATCC BAA-680 / CLIP 11262).